We begin with the raw amino-acid sequence, 105 residues long: Large ribosomal subunit protein bL34m (105 aa).

The transit peptide at 1–16 directs the protein to the mitochondrion; that stretch reads MPLFARLCQPQSRRMF.

The protein belongs to the bacterial ribosomal protein bL34 family. Component of the mitochondrial large ribosomal subunit (mt-LSU). Mature yeast 74S mitochondrial ribosomes consist of a small (37S) and a large (54S) subunit. The 37S small subunit contains a 15S ribosomal RNA (15S mt-rRNA) and 34 different proteins. The 54S large subunit contains a 21S rRNA (21S mt-rRNA) and 46 different proteins.

It is found in the mitochondrion. Functionally, component of the mitochondrial ribosome (mitoribosome), a dedicated translation machinery responsible for the synthesis of mitochondrial genome-encoded proteins, including at least some of the essential transmembrane subunits of the mitochondrial respiratory chain. The mitoribosomes are attached to the mitochondrial inner membrane and translation products are cotranslationally integrated into the membrane. This chain is Large ribosomal subunit protein bL34m, found in Saccharomyces cerevisiae (strain ATCC 204508 / S288c) (Baker's yeast).